A 159-amino-acid polypeptide reads, in one-letter code: Nucleoside diphosphate kinase (159 aa).

ATP contacts are provided by Lys13, Phe61, Arg89, Thr95, Arg106, and Asn116. Catalysis depends on His119, which acts as the Pros-phosphohistidine intermediate.

Belongs to the NDK family. Mg(2+) serves as cofactor.

Its subcellular location is the cytoplasm. It catalyses the reaction a 2'-deoxyribonucleoside 5'-diphosphate + ATP = a 2'-deoxyribonucleoside 5'-triphosphate + ADP. The enzyme catalyses a ribonucleoside 5'-diphosphate + ATP = a ribonucleoside 5'-triphosphate + ADP. Functionally, major role in the synthesis of nucleoside triphosphates other than ATP. The ATP gamma phosphate is transferred to the NDP beta phosphate via a ping-pong mechanism, using a phosphorylated active-site intermediate. The chain is Nucleoside diphosphate kinase from Halorubrum lacusprofundi (strain ATCC 49239 / DSM 5036 / JCM 8891 / ACAM 34).